Consider the following 161-residue polypeptide: Phosphopantetheine adenylyltransferase (161 aa).

Residue serine 10 coordinates substrate. ATP-binding positions include 10–11 and histidine 18; that span reads SF. Substrate-binding residues include lysine 42, alanine 75, and arginine 89. Residues 90 to 92, glutamate 100, and 125 to 131 contribute to the ATP site; these read GLR and LSPISSS.

This sequence belongs to the bacterial CoaD family. Homohexamer. Requires Mg(2+) as cofactor.

It is found in the cytoplasm. It catalyses the reaction (R)-4'-phosphopantetheine + ATP + H(+) = 3'-dephospho-CoA + diphosphate. The protein operates within cofactor biosynthesis; coenzyme A biosynthesis; CoA from (R)-pantothenate: step 4/5. Functionally, reversibly transfers an adenylyl group from ATP to 4'-phosphopantetheine, yielding dephospho-CoA (dPCoA) and pyrophosphate. This Streptococcus agalactiae serotype Ia (strain ATCC 27591 / A909 / CDC SS700) protein is Phosphopantetheine adenylyltransferase.